We begin with the raw amino-acid sequence, 231 residues long: ATP phosphoribosyltransferase (231 aa).

Belongs to the ATP phosphoribosyltransferase family. Short subfamily. In terms of assembly, heteromultimer composed of HisG and HisZ subunits.

It is found in the cytoplasm. The catalysed reaction is 1-(5-phospho-beta-D-ribosyl)-ATP + diphosphate = 5-phospho-alpha-D-ribose 1-diphosphate + ATP. It participates in amino-acid biosynthesis; L-histidine biosynthesis; L-histidine from 5-phospho-alpha-D-ribose 1-diphosphate: step 1/9. Catalyzes the condensation of ATP and 5-phosphoribose 1-diphosphate to form N'-(5'-phosphoribosyl)-ATP (PR-ATP). Has a crucial role in the pathway because the rate of histidine biosynthesis seems to be controlled primarily by regulation of HisG enzymatic activity. This Rhizobium etli (strain ATCC 51251 / DSM 11541 / JCM 21823 / NBRC 15573 / CFN 42) protein is ATP phosphoribosyltransferase (hisG).